The following is a 125-amino-acid chain: UPF0102 protein PA4424 (125 aa).

This sequence belongs to the UPF0102 family.

This chain is UPF0102 protein PA4424, found in Pseudomonas aeruginosa (strain ATCC 15692 / DSM 22644 / CIP 104116 / JCM 14847 / LMG 12228 / 1C / PRS 101 / PAO1).